A 1124-amino-acid chain; its full sequence is uncharacterized protein (1124 aa).

The signal sequence occupies residues 1–28 (MALFPRSILIALVLSFVLNLGLVTKIHA). Helical transmembrane passes span 332–352 (IVTAFLTLYVMFFGFKLLLAG), 359–379 (EYINFILKIIFVTYFSIGINI), 393–413 (MIQWAFPFLLNGINGLASWVM), 495–515 (MLVSLALSYPLLVISVAAFMV), 522–542 (MISIVILGILAPLFVPMFLFA), 555–575 (MISFLLQPMVVVTFMITMFAV), and 700–720 (IKNILLALVTACFTLYLMYNF).

It belongs to the TrbL/VirB6 family.

It is found in the cell membrane. This is an uncharacterized protein from Rickettsia prowazekii (strain Madrid E).